The following is a 151-amino-acid chain: Cyanate hydratase (151 aa).

Active-site residues include arginine 92, glutamate 95, and serine 118.

The protein belongs to the cyanase family.

It carries out the reaction cyanate + hydrogencarbonate + 3 H(+) = NH4(+) + 2 CO2. Catalyzes the reaction of cyanate with bicarbonate to produce ammonia and carbon dioxide. The sequence is that of Cyanate hydratase from Coprinopsis cinerea (strain Okayama-7 / 130 / ATCC MYA-4618 / FGSC 9003) (Inky cap fungus).